Consider the following 275-residue polypeptide: 4-diphosphocytidyl-2-C-methyl-D-erythritol kinase (275 aa).

Lys14 is a catalytic residue. 98–108 (PMGAGLGGGSS) contacts ATP. Asp140 is an active-site residue.

It belongs to the GHMP kinase family. IspE subfamily.

It catalyses the reaction 4-CDP-2-C-methyl-D-erythritol + ATP = 4-CDP-2-C-methyl-D-erythritol 2-phosphate + ADP + H(+). It participates in isoprenoid biosynthesis; isopentenyl diphosphate biosynthesis via DXP pathway; isopentenyl diphosphate from 1-deoxy-D-xylulose 5-phosphate: step 3/6. In terms of biological role, catalyzes the phosphorylation of the position 2 hydroxy group of 4-diphosphocytidyl-2C-methyl-D-erythritol. The polypeptide is 4-diphosphocytidyl-2-C-methyl-D-erythritol kinase (Francisella tularensis subsp. tularensis (strain WY96-3418)).